Here is a 103-residue protein sequence, read N- to C-terminus: Small ribosomal subunit protein uS10 (103 aa).

This sequence belongs to the universal ribosomal protein uS10 family. In terms of assembly, part of the 30S ribosomal subunit.

In terms of biological role, involved in the binding of tRNA to the ribosomes. This Colwellia psychrerythraea (strain 34H / ATCC BAA-681) (Vibrio psychroerythus) protein is Small ribosomal subunit protein uS10.